The primary structure comprises 313 residues: Adhesin MafA 1/2 (313 aa).

The N-terminal stretch at 1–14 is a signal peptide; sequence MKTLLLLIPLVLTA. Cysteine 15 is lipidated: N-palmitoyl cysteine. The S-diacylglycerol cysteine moiety is linked to residue cysteine 15. Positions 282-298 are enriched in polar residues; it reads GDTTAQNRPDFKQNNGK. The tract at residues 282-313 is disordered; that stretch reads GDTTAQNRPDFKQNNGKNPDVGNEVIRRRKGG.

This sequence belongs to the MafA family.

Its subcellular location is the cell outer membrane. This is Adhesin MafA 1/2 (mafA1) from Neisseria meningitidis serogroup C (strain 053442).